A 165-amino-acid polypeptide reads, in one-letter code: 16S rRNA aminocarboxypropyltransferase (165 aa).

S-adenosyl-L-methionine contacts are provided by threonine 17, leucine 62, leucine 83, and threonine 102.

Belongs to the TDD superfamily. TSR3 family.

The protein resides in the cytoplasm. It carries out the reaction an N(1)-methylpseudouridine in rRNA + S-adenosyl-L-methionine = N(1)-methyl-N(3)-[(3S)-3-amino-3-carboxypropyl]pseudouridine in rRNA + S-methyl-5'-thioadenosine + H(+). Aminocarboxypropyltransferase that catalyzes the aminocarboxypropyl transfer on pseudouridine corresponding to position 914 in M.jannaschii 16S rRNA. It constitutes the last step in biosynthesis of the hypermodified N1-methyl-N3-(3-amino-3-carboxypropyl) pseudouridine (m1acp3-Psi). In Halobacterium salinarum (strain ATCC 700922 / JCM 11081 / NRC-1) (Halobacterium halobium), this protein is 16S rRNA aminocarboxypropyltransferase.